We begin with the raw amino-acid sequence, 412 residues long: Serine hydroxymethyltransferase (412 aa).

(6S)-5,6,7,8-tetrahydrofolate-binding positions include leucine 117 and 121–123 (GHL). Lysine 226 carries the N6-(pyridoxal phosphate)lysine modification.

The protein belongs to the SHMT family. Homodimer. It depends on pyridoxal 5'-phosphate as a cofactor.

It localises to the cytoplasm. It carries out the reaction (6R)-5,10-methylene-5,6,7,8-tetrahydrofolate + glycine + H2O = (6S)-5,6,7,8-tetrahydrofolate + L-serine. It functions in the pathway one-carbon metabolism; tetrahydrofolate interconversion. Its pathway is amino-acid biosynthesis; glycine biosynthesis; glycine from L-serine: step 1/1. Catalyzes the reversible interconversion of serine and glycine with tetrahydrofolate (THF) serving as the one-carbon carrier. This reaction serves as the major source of one-carbon groups required for the biosynthesis of purines, thymidylate, methionine, and other important biomolecules. Also exhibits THF-independent aldolase activity toward beta-hydroxyamino acids, producing glycine and aldehydes, via a retro-aldol mechanism. The polypeptide is Serine hydroxymethyltransferase (Staphylococcus haemolyticus (strain JCSC1435)).